A 529-amino-acid chain; its full sequence is N5-hydroxyornithine acetylase sidL (529 aa).

Disordered stretches follow at residues 59-95 (ASVNGEGHAQPAGDDHATAVDAGDGSAQKRKKRVRPF) and 239-258 (SPWPGSSGSPNDSRPGSPVA). H462 serves as a coordination point for substrate. E498 (proton acceptor) is an active-site residue.

It belongs to the lysine N-acyltransferase mbtK family.

The protein localises to the cytoplasm. The protein resides in the cytosol. Its pathway is siderophore biosynthesis. Its function is as follows. Acyltransferase; part of the gene cluster that mediates the biosynthesis of at least 11 siderophores, including beauverichelin A, dimerumic acid (DA), Na-dimethyl coprogen (NADC), eleutherazine B, ferricrocin (FC), fusarinine A, fusarinine C (FsC), metachelin A, mevalonolactone, rhodotorulic acid (RA) and tenellin. This cocktail of siderophores for iron metabolism is essential for virulence, and more specifically for the fungal virulence in penetrating through the host cuticle. Siderophore synthesis is also involved in conidial germination under iron-deficient conditions. SIDL contributes to partial production of ferricrocin under iron-limiting conditions via the acetylation of N(5)-hydroxyornithine. The polypeptide is N5-hydroxyornithine acetylase sidL (Beauveria bassiana (strain ARSEF 2860) (White muscardine disease fungus)).